A 565-amino-acid polypeptide reads, in one-letter code: Sulfite reductase [NADPH] hemoprotein beta-component (565 aa).

Positions 429, 435, 474, and 478 each coordinate [4Fe-4S] cluster. Residue Cys478 coordinates siroheme.

The protein belongs to the nitrite and sulfite reductase 4Fe-4S domain family. In terms of assembly, alpha(8)-beta(8). The alpha component is a flavoprotein, the beta component is a hemoprotein. The cofactor is siroheme. Requires [4Fe-4S] cluster as cofactor.

It carries out the reaction hydrogen sulfide + 3 NADP(+) + 3 H2O = sulfite + 3 NADPH + 4 H(+). The protein operates within sulfur metabolism; hydrogen sulfide biosynthesis; hydrogen sulfide from sulfite (NADPH route): step 1/1. Its function is as follows. Component of the sulfite reductase complex that catalyzes the 6-electron reduction of sulfite to sulfide. This is one of several activities required for the biosynthesis of L-cysteine from sulfate. In Shewanella baltica (strain OS155 / ATCC BAA-1091), this protein is Sulfite reductase [NADPH] hemoprotein beta-component.